Consider the following 379-residue polypeptide: Fucose-specific lectin g276 (379 aa).

Glutamate 126 contacts alpha-L-fucose. The beta-L-fucose site is built by glutamate 126, arginine 163, and tryptophan 185. Alpha-L-fucose contacts are provided by tryptophan 185, arginine 222, and glutamate 234. Residues tryptophan 242 and glutamate 282 each contribute to the beta-L-fucose site. Tryptophan 289 is a binding site for alpha-L-fucose.

It belongs to the fungal fucose-specific lectin family.

Its function is as follows. Lectin that specifically binds to L-fucose. Is associated with the morphogenesis of the fungus, and plays a role in the formation of the constricting rings involved in nematode-trapping. The polypeptide is Fucose-specific lectin g276 (Arthrobotrys oligospora (strain ATCC 24927 / CBS 115.81 / DSM 1491) (Nematode-trapping fungus)).